A 399-amino-acid chain; its full sequence is Forkhead box protein A4-A (399 aa).

Residues 119–213 (KPPYSYISLI…ENGCYLRRQK (95 aa)) constitute a DNA-binding region (fork-head). Positions 219–234 (RSKSGEGEKKVNKPGE) are enriched in basic and acidic residues. The tract at residues 219–290 (RSKSGEGEKK…VGLSPTSEQA (72 aa)) is disordered. Polar residues predominate over residues 267–277 (STGSSIHQACG).

As to expression, during stages 8.5 to 10, expressed in the part of the dorsal mesoderm invaginating the dorsal blastopore lip (Spemann organizer), as a direct response to dorsal mesodermal induction. At stage 12 (mid-gastrulation), restricted to the dorsal midline in the deeper layers of mesodermal cells. Continuously present in the posterior portion of invaginated mesoderm and expressed within the notochord. Also present in the midline of the neural plate during gastrulation, but absent from the notoplate in exogastrula embryos. Expression in the notochord continues in neurula-stage embryos and at stage 20 in addition to the notochord, expression is seen in the pharyngeal endoderm.

It is found in the nucleus. Its function is as follows. Transcriptional repressor involved in embryonic nervous system development. Plays a role in the induction and patterning of the anterior-posterior neural axis. Involved in the establishment of floor plate differentiation from neural plate cells during gastrulation. Binds the anf1 promoter sequence to restrict expression of anf1 to the anterior of the neural plate, thereby patterning the forebrain. Can bind to the HNF-3-alpha DNA target sequence. Cooperates with t/bra in a dose-dependent manner to specify dorsal mesoderm formation, including notochord. Binds to DNA via the target sequence 5'-[GA]TAAA[TC]A-3', with 5'-GTAAATA-3' being the preferred binding site. The polypeptide is Forkhead box protein A4-A (foxa4-a) (Xenopus laevis (African clawed frog)).